The primary structure comprises 148 residues: Large ribosomal subunit protein uL11 (148 aa).

Belongs to the universal ribosomal protein uL11 family. As to quaternary structure, part of the ribosomal stalk of the 50S ribosomal subunit. Interacts with L10 and the large rRNA to form the base of the stalk. L10 forms an elongated spine to which L12 dimers bind in a sequential fashion forming a multimeric L10(L12)X complex. In terms of processing, one or more lysine residues are methylated.

Functionally, forms part of the ribosomal stalk which helps the ribosome interact with GTP-bound translation factors. The polypeptide is Large ribosomal subunit protein uL11 (Myxococcus xanthus (strain DK1622)).